Consider the following 388-residue polypeptide: ATP phosphoribosyltransferase regulatory subunit (388 aa).

It belongs to the class-II aminoacyl-tRNA synthetase family. HisZ subfamily. Heteromultimer composed of HisG and HisZ subunits.

The protein localises to the cytoplasm. It functions in the pathway amino-acid biosynthesis; L-histidine biosynthesis; L-histidine from 5-phospho-alpha-D-ribose 1-diphosphate: step 1/9. Its function is as follows. Required for the first step of histidine biosynthesis. May allow the feedback regulation of ATP phosphoribosyltransferase activity by histidine. The polypeptide is ATP phosphoribosyltransferase regulatory subunit (Acinetobacter baylyi (strain ATCC 33305 / BD413 / ADP1)).